The following is an 83-amino-acid chain: Carboxysome shell vertex protein CsoS4A (83 aa).

A BMV domain is found at 1 to 78; the sequence is MKIMQVEKTL…SDLTIIGIID (78 aa).

It belongs to the CcmL/EutN family. CsoS4 subfamily. In terms of assembly, homopentamer.

It is found in the carboxysome. Probably forms vertices in the carboxysome, a polyhedral inclusion where RuBisCO (ribulose bisphosphate carboxylase, cbbL-cbbS) is sequestered. Has been modeled to induce curvature upon insertion into an otherwise flat hexagonal layer of major carboxysome subunits. A minor shell protein, only 12 pentamers of CsoS4A/CsoS4B are calculated to be present in each carboxysome. The 2 CsoS4 proteins contribute to the impermeability of the carboxysome to CO(2). Its function is as follows. Unlike beta-carboxysomes, alpha-carboxysomes (Cb) can form without cargo protein. CsoS2 is essential for Cb formation and is also capable of targeting foreign proteins to the Cb. The Cb shell assembles with the aid of CsoS2; CsoS1A, CsoS1B and CsoS1C form the majority of the shell while CsoS4A and CsoS4B form vertices. CsoS1D forms pseudohexamers that probably control metabolite flux into and out of the shell. This chain is Carboxysome shell vertex protein CsoS4A, found in Halothiobacillus neapolitanus (strain ATCC 23641 / c2) (Thiobacillus neapolitanus).